The following is a 447-amino-acid chain: Succinate--CoA ligase [ADP-forming] subunit beta, mitochondrial (447 aa).

Residues 1-34 (MFKLGRNRALASAFAATSRAPLASRLPSVSQQQR) constitute a mitochondrion transit peptide. In terms of domain architecture, ATP-grasp spans 45–287 (ADLLRQYGIG…TTQEDPDEVR (243 aa)). Residues Lys82, 89 to 91 (GRG), and Glu150 contribute to the ATP site. Mg(2+) contacts are provided by Asn242 and Asp256. Residues Asn307 and 364–366 (GIV) contribute to the substrate site.

This sequence belongs to the succinate/malate CoA ligase beta subunit family. Heterodimer of an alpha and a beta subunit. Mg(2+) is required as a cofactor.

The protein resides in the mitochondrion. It catalyses the reaction succinate + ATP + CoA = succinyl-CoA + ADP + phosphate. Its pathway is carbohydrate metabolism; tricarboxylic acid cycle; succinate from succinyl-CoA (ligase route): step 1/1. Functionally, succinyl-CoA synthetase functions in the citric acid cycle (TCA), coupling the hydrolysis of succinyl-CoA to the synthesis of ATP and thus represents the only step of substrate-level phosphorylation in the TCA. The beta subunit provides nucleotide specificity of the enzyme and binds the substrate succinate, while the binding sites for coenzyme A and phosphate are found in the alpha subunit. The polypeptide is Succinate--CoA ligase [ADP-forming] subunit beta, mitochondrial (Neurospora crassa (strain ATCC 24698 / 74-OR23-1A / CBS 708.71 / DSM 1257 / FGSC 987)).